An 894-amino-acid polypeptide reads, in one-letter code: MAVKSQLGVTYTTKTFPPSPPRTVGNSHAGSDDERDEVDATPTTPPVEKLGQLLKPYSLPPTNTPTHVLPEDLKTPDHRVNRDPRLIRLTGVHPFNVEPPLTDLYDEGFLNSENLHYVRNHGPVPHCPDDESLNWTFTVDGLVEKPFTIAVRDLIQKYDQFTYPVTLVCAGNRRKEQNVVRKSKGFSWGAAGLSTALWTGVPIGALLRMAKPKRAAKYVCFEGADKLPNGYYGTSVKLNWCMDENRGIMVAHKMNGQSLHPDHGKPVRIIIPGQIGGRSVKWLKKITITSEPSDNWYHIYDNRVLPTTISPDASANLPDVWKDEKYAIYDLNANSAICYPRHDERLVLATAPDTYKVRGYAYGGGGKRITRLEVTLNKGKSWLLAGIHYPEDDYRRAPDGDLLYGGSTDMWWRETCFCWCFWEIDIPVADLSAADDIMIRAMDEGMMVQPRDMYWSVLGMMNNPWFRVVIHKEDGALRFEHPTQPALMPGGWMERVKRRGGNLTNGFWGEKTAAEEEQVLAEPEKEICMTNPKVVRIISLEELKAHEGEMEPWFVVNGHVYNGTPYLDNHPGGATSIINAAAQDATEEFMTIHSENAKAMMPQYHIGTLNDAARKALEGSAEESPASDPTRAVFLQPKYWSKAILETKTDVSSDSKIFSFRLDHAAQSIGLPTGQHLLVRLRDPATREAVIRAYTPLSETHAKGQLDILIKIYRDVPGQPGGKMTQALDSIPLGHFVDIKGPVGKFEYLGKGHCTVSGTSRHVRRFVMICAGSGVTPIFQVLRAVTSDAQDGTECLVLDGNRCEKDILCREELDAMVARAPARTTLLHKLSRPDASWCGLRGRMDKEYLEEHIGGFRKSDGREMVLVCGPAALEETVRSVLVEMAWKPEDMLFF.

The disordered stretch occupies residues 1–79 (MAVKSQLGVT…PEDLKTPDHR (79 aa)). Positions 7-16 (LGVTYTTKTF) are enriched in polar residues. A compositionally biased stretch (basic and acidic residues) spans 69-79 (LPEDLKTPDHR). Cysteine 169 is a Mo-molybdopterin binding site. One can recognise a Cytochrome b5 heme-binding domain in the interval 535–610 (VRIISLEELK…MPQYHIGTLN (76 aa)). Histidine 570 and histidine 593 together coordinate heme. Positions 638-749 (KYWSKAILET…KGPVGKFEYL (112 aa)) constitute an FAD-binding FR-type domain. Residues 692–695 (RAYT), 709–713 (LIKIY), 723–725 (KMT), serine 773, and threonine 776 contribute to the FAD site.

Belongs to the nitrate reductase family. In terms of assembly, homodimer. FAD serves as cofactor. It depends on heme as a cofactor. The cofactor is Mo-molybdopterin.

The enzyme catalyses nitrite + NADP(+) + H2O = nitrate + NADPH + H(+). Functionally, nitrate reductase is a key enzyme involved in the first step of nitrate assimilation in plants, fungi and bacteria. This Beauveria bassiana (White muscardine disease fungus) protein is Nitrate reductase [NADPH] (NIA).